We begin with the raw amino-acid sequence, 262 residues long: 1,2-epoxyphenylacetyl-CoA isomerase (262 aa).

This sequence belongs to the enoyl-CoA hydratase/isomerase family.

The catalysed reaction is 2-(1,2-epoxy-1,2-dihydrophenyl)acetyl-CoA = 2-oxepin-2(3H)-ylideneacetyl-CoA. It participates in aromatic compound metabolism; phenylacetate degradation. Its function is as follows. Catalyzes the reversible conversion of the epoxide to 2-oxepin-2(3H)-ylideneacetyl-CoA (oxepin-CoA). This Escherichia coli (strain K12) protein is 1,2-epoxyphenylacetyl-CoA isomerase (paaG).